We begin with the raw amino-acid sequence, 499 residues long: Maturase K (499 aa).

It belongs to the intron maturase 2 family. MatK subfamily.

The protein resides in the plastid. The protein localises to the chloroplast. In terms of biological role, usually encoded in the trnK tRNA gene intron. Probably assists in splicing its own and other chloroplast group II introns. In Macrozamia communis (Burrawang palm), this protein is Maturase K.